Here is a 249-residue protein sequence, read N- to C-terminus: MAPSRKFFVGGNWKMNGRKKCLGELICTLNAAKLPADTEVVCAPPTAYIDFARQKLDPKIAVAAQNCYKVTNGAFTGEISPGMIKDLGATWVVLGHSERRHIFGESDELIGQKVNHALSEGLGVIACIGEKLDEREAGITEKVVFEQTKAIADNVKDWCKVVLAYEPVWAIGTGKTATPQQAQEVHEKLRGWLKCNVSEGVAQCTRIIYGGSVTGATCKELASQPDVDGFLVGGASLKPEFVDIINAKQ.

Positions 12 and 14 each coordinate substrate. Lys-14 carries the post-translational modification N6-acetyllysine. Position 68 is a 3'-nitrotyrosine (Tyr-68). Phosphoserine is present on Ser-80. His-96 (electrophile) is an active-site residue. At Ser-106 the chain carries Phosphoserine. Residue Lys-142 forms a Glycyl lysine isopeptide (Lys-Gly) (interchain with G-Cter in SUMO1) linkage. Residue Lys-149 is modified to N6-succinyllysine. Position 156 is an N6-acetyllysine; alternate (Lys-156). Lys-156 bears the N6-succinyllysine; alternate mark. Glu-166 (proton acceptor) is an active-site residue. Position 173 is a phosphothreonine (Thr-173). N6-acetyllysine; alternate is present on Lys-194. At Lys-194 the chain carries N6-succinyllysine; alternate. Lys-194 is subject to N6-methyllysine; alternate. Phosphoserine is present on Ser-198. A 3'-nitrotyrosine modification is found at Tyr-209. A Phosphoserine modification is found at Ser-212. A Phosphothreonine modification is found at Thr-214. Ser-223 bears the Phosphoserine mark. N6-acetyllysine is present on Lys-238.

Belongs to the triosephosphate isomerase family. In terms of assembly, homodimer.

Its subcellular location is the cytoplasm. It carries out the reaction dihydroxyacetone phosphate = methylglyoxal + phosphate. The enzyme catalyses D-glyceraldehyde 3-phosphate = dihydroxyacetone phosphate. The protein operates within carbohydrate degradation; glycolysis; D-glyceraldehyde 3-phosphate from glycerone phosphate: step 1/1. It functions in the pathway carbohydrate biosynthesis; gluconeogenesis. Functionally, triosephosphate isomerase is an extremely efficient metabolic enzyme that catalyzes the interconversion between dihydroxyacetone phosphate (DHAP) and D-glyceraldehyde-3-phosphate (G3P) in glycolysis and gluconeogenesis. Its function is as follows. It is also responsible for the non-negligible production of methylglyoxal a reactive cytotoxic side-product that modifies and can alter proteins, DNA and lipids. The polypeptide is Triosephosphate isomerase (Tpi1) (Rattus norvegicus (Rat)).